Consider the following 256-residue polypeptide: Small ribosomal subunit protein uS2 (256 aa).

The protein belongs to the universal ribosomal protein uS2 family.

This Rhizobium rhizogenes (strain K84 / ATCC BAA-868) (Agrobacterium radiobacter) protein is Small ribosomal subunit protein uS2.